The chain runs to 502 residues: ATP synthase subunit alpha (502 aa).

The interval 114–139 (PIDGRGPIETSKTRPIESPAPGVMDR) is disordered. Residue 169 to 176 (GDRQTGKT) participates in ATP binding.

The protein belongs to the ATPase alpha/beta chains family. F-type ATPases have 2 components, CF(1) - the catalytic core - and CF(0) - the membrane proton channel. CF(1) has five subunits: alpha(3), beta(3), gamma(1), delta(1), epsilon(1). CF(0) has three main subunits: a(1), b(2) and c(9-12). The alpha and beta chains form an alternating ring which encloses part of the gamma chain. CF(1) is attached to CF(0) by a central stalk formed by the gamma and epsilon chains, while a peripheral stalk is formed by the delta and b chains.

It is found in the cell membrane. It carries out the reaction ATP + H2O + 4 H(+)(in) = ADP + phosphate + 5 H(+)(out). Functionally, produces ATP from ADP in the presence of a proton gradient across the membrane. The alpha chain is a regulatory subunit. The protein is ATP synthase subunit alpha of Halalkalibacterium halodurans (strain ATCC BAA-125 / DSM 18197 / FERM 7344 / JCM 9153 / C-125) (Bacillus halodurans).